The following is a 289-amino-acid chain: MLRDLFVKKKKYAAIPSEQVRKDVPDGVMTKCPKCKKIMYTKELLKNLKVCVNCGYHHPMNAWERLDSILDEGSFREYDKEMVSLNPLEFPGYEEKLESDRKKTELNEAVVTGEGTIDDMLVVVAVMDSRFRMGSMGSVVGEKIARAVEKAYDLQVPFIIFTASGGARMQEGILSLMQMAKTSVALKKHSNAGGLFISVMTHPTTGGVSASFASLGDYNLAEPGALIGFAGRRVIEQTVREKLPEDFQTAEFLLEHGQLDAVVHRDDMRESLRKILEVHQGGEMAVWQS.

The CoA carboxyltransferase N-terminal domain maps to 28-289 (VMTKCPKCKK…QGGEMAVWQS (262 aa)). Zn(2+) is bound by residues Cys32, Cys35, Cys51, and Cys54. The segment at 32–54 (CPKCKKIMYTKELLKNLKVCVNC) adopts a C4-type zinc-finger fold.

It belongs to the AccD/PCCB family. Acetyl-CoA carboxylase is a heterohexamer composed of biotin carboxyl carrier protein (AccB), biotin carboxylase (AccC) and two subunits each of ACCase subunit alpha (AccA) and ACCase subunit beta (AccD). Zn(2+) serves as cofactor.

The protein resides in the cytoplasm. It carries out the reaction N(6)-carboxybiotinyl-L-lysyl-[protein] + acetyl-CoA = N(6)-biotinyl-L-lysyl-[protein] + malonyl-CoA. The protein operates within lipid metabolism; malonyl-CoA biosynthesis; malonyl-CoA from acetyl-CoA: step 1/1. Functionally, component of the acetyl coenzyme A carboxylase (ACC) complex. Biotin carboxylase (BC) catalyzes the carboxylation of biotin on its carrier protein (BCCP) and then the CO(2) group is transferred by the transcarboxylase to acetyl-CoA to form malonyl-CoA. In Bacillus cereus (strain ATCC 10987 / NRS 248), this protein is Acetyl-coenzyme A carboxylase carboxyl transferase subunit beta.